The chain runs to 170 residues: ATP synthase subunit b (170 aa).

A helical transmembrane segment spans residues 30-50 (FFFVLAIFLVVLGVIGTFVVP).

This sequence belongs to the ATPase B chain family. As to quaternary structure, F-type ATPases have 2 components, F(1) - the catalytic core - and F(0) - the membrane proton channel. F(1) has five subunits: alpha(3), beta(3), gamma(1), delta(1), epsilon(1). F(0) has three main subunits: a(1), b(2) and c(10-14). The alpha and beta chains form an alternating ring which encloses part of the gamma chain. F(1) is attached to F(0) by a central stalk formed by the gamma and epsilon chains, while a peripheral stalk is formed by the delta and b chains.

Its subcellular location is the cell membrane. Functionally, f(1)F(0) ATP synthase produces ATP from ADP in the presence of a proton or sodium gradient. F-type ATPases consist of two structural domains, F(1) containing the extramembraneous catalytic core and F(0) containing the membrane proton channel, linked together by a central stalk and a peripheral stalk. During catalysis, ATP synthesis in the catalytic domain of F(1) is coupled via a rotary mechanism of the central stalk subunits to proton translocation. Component of the F(0) channel, it forms part of the peripheral stalk, linking F(1) to F(0). The polypeptide is ATP synthase subunit b (Mycobacterium leprae (strain TN)).